A 4639-amino-acid polypeptide reads, in one-letter code: Dynein heavy chain, cytoplasmic (4639 aa).

Positions 1–1856 are stem; that stretch reads MGDSLENPDT…TIHMANARFF (1856 aa). Coiled-coil stretches lie at residues 530 to 565, 774 to 794, and 1264 to 1368; these read LDIT…LRDQ, SLIE…DRAS, and DDAL…ARLR. AAA regions lie at residues 1857-2084, 2166-2437, 2541-2790, and 2884-3153; these read YGFE…VLIS, EEIR…FTRL, EVET…WVRG, and VFYE…GGRT. ATP contacts are provided by residues 1895–1902, 2210–2217, 2580–2587, and 2922–2929; these read GPAGTGKT, GPSGSGKS, GPPGSGKT, and GVSGAGKT. Coiled-coil stretches lie at residues 3189–3261, 3382–3478, and 3723–3782; these read GLNK…EKRK, AIAQ…WEST, and EFRL…EIET. Positions 3189–3478 are stalk; sequence GLNKIAETVE…NIERERWEST (290 aa). AAA stretches follow at residues 3539–3768 and 3989–4205; these read LSNP…DINQ and AHNV…TLDT.

Belongs to the dynein heavy chain family. As to quaternary structure, consists of at least two heavy chains and a number of intermediate and light chains.

The protein resides in the cytoplasm. Its subcellular location is the cytoskeleton. Its function is as follows. Cytoplasmic dynein acts as a motor for the intracellular retrograde motility of vesicles and organelles along microtubules. Dynein has ATPase activity; the force-producing power stroke is thought to occur on release of ADP. The protein is Dynein heavy chain, cytoplasmic (Dhc64C) of Drosophila melanogaster (Fruit fly).